Here is a 117-residue protein sequence, read N- to C-terminus: Circadian clock oscillator protein KaiB (117 aa).

The protein belongs to the KaiB family. As to quaternary structure, may undergo a major conformational rearrangment; in the free state forms homooligomers. When bound to KaiC switches to a monomeric thioredoxin-fold (KaiB(fs)). The active oscillator complex is probably KaiC(6):KaiB(6).

Functionally, component of the KaiBC clock protein complex, which constitutes the main circadian regulator in cyanobacteria; it may modify the ATPase activity of KaiC. In terms of biological role, may be a metamorphic protein which reversibly switches between an inactive tetrameric fold and a rare, thioredoxin-like monomeric fold (KaiB(fs)). KaiB(fs) binds phospho-KaiC, and perhaps clock output effectors. In Prochlorococcus marinus (strain SARG / CCMP1375 / SS120), this protein is Circadian clock oscillator protein KaiB.